The sequence spans 204 residues: Guanylate kinase (204 aa).

Residues 3–181 (GTLYIVSAAS…AVSEMSAIFT (179 aa)) enclose the Guanylate kinase-like domain. 10 to 17 (AASGTGKS) lines the ATP pocket.

This sequence belongs to the guanylate kinase family.

The protein localises to the cytoplasm. It carries out the reaction GMP + ATP = GDP + ADP. Essential for recycling GMP and indirectly, cGMP. The polypeptide is Guanylate kinase (gmk) (Xylella fastidiosa (strain 9a5c)).